A 273-amino-acid chain; its full sequence is 4-hydroxy-tetrahydrodipicolinate reductase (273 aa).

Residues 12–17 (GAGGRM) and glutamate 38 contribute to the NAD(+) site. Arginine 39 contributes to the NADP(+) binding site. NAD(+)-binding positions include 102 to 104 (GTT) and 126 to 129 (AANF). Residue histidine 159 is the Proton donor/acceptor of the active site. Histidine 160 is a (S)-2,3,4,5-tetrahydrodipicolinate binding site. Residue lysine 163 is the Proton donor of the active site. 169 to 170 (GT) contacts (S)-2,3,4,5-tetrahydrodipicolinate.

It belongs to the DapB family. In terms of assembly, homotetramer.

It is found in the cytoplasm. The catalysed reaction is (S)-2,3,4,5-tetrahydrodipicolinate + NAD(+) + H2O = (2S,4S)-4-hydroxy-2,3,4,5-tetrahydrodipicolinate + NADH + H(+). The enzyme catalyses (S)-2,3,4,5-tetrahydrodipicolinate + NADP(+) + H2O = (2S,4S)-4-hydroxy-2,3,4,5-tetrahydrodipicolinate + NADPH + H(+). It functions in the pathway amino-acid biosynthesis; L-lysine biosynthesis via DAP pathway; (S)-tetrahydrodipicolinate from L-aspartate: step 4/4. In terms of biological role, catalyzes the conversion of 4-hydroxy-tetrahydrodipicolinate (HTPA) to tetrahydrodipicolinate. This Salmonella gallinarum (strain 287/91 / NCTC 13346) protein is 4-hydroxy-tetrahydrodipicolinate reductase.